The sequence spans 540 residues: MAAKDVKFGNDARVKMLRGVNVLADAVKVTLGPKGRNVVLDKSFGAPTITKDGVSVAREIELEDKFENMGAQMVKEVASKANDAAGDGTTTATVLAQSIITEGLKAVAAGMNPMDLKRGIDKAVAAAVEELKTLSVPCSDSKAIAQVGTISANSDETVGKLIAEAMDKVGKEGVITVEDGTGLQDELDVVEGMQFDRGYLSPYFINKPETGAVELESPFILLADKKISNIREMLPVLEAVAKAGKPLLIIAEDVEGEALATLVVNTMRGIVKVAAVKAPGFGDRRKAMLQDIATLTGGTVISEEIGMELEKSTLEDLGQAKRVVINKDTTTIIDGVGEESAIQGRVTQIRQQIEEATSDYDREKLQERVAKLAGGVAVIKVGAATEVEMKEKKARVEDALHATRAAVEEGVVAGGGVALIRVASKIAELKGQNEDQNVGIKVALRAMESPLRQIVLNCGEEPSVVANTVKSGDGNYGYNAATEEYGNMIDMGILDPTKVTRSALQYAASVAGLMITTECMVTDLPKGDAPDLGAAGGMGG.

Residues 30 to 33, K51, 87 to 91, G415, 479 to 481, and D495 each bind ATP; these read TLGP, DGTTT, and NAA.

Belongs to the chaperonin (HSP60) family. As to quaternary structure, forms a cylinder of 14 subunits composed of two heptameric rings stacked back-to-back. Interacts with the co-chaperonin GroES.

It is found in the cytoplasm. The catalysed reaction is ATP + H2O + a folded polypeptide = ADP + phosphate + an unfolded polypeptide.. In terms of biological role, together with its co-chaperonin GroES, plays an essential role in assisting protein folding. The GroEL-GroES system forms a nano-cage that allows encapsulation of the non-native substrate proteins and provides a physical environment optimized to promote and accelerate protein folding. The polypeptide is Chaperonin GroEL (Raoultella planticola (Klebsiella planticola)).